The chain runs to 569 residues: Proline--tRNA ligase (569 aa).

It belongs to the class-II aminoacyl-tRNA synthetase family. ProS type 1 subfamily. As to quaternary structure, homodimer.

It is found in the cytoplasm. It carries out the reaction tRNA(Pro) + L-proline + ATP = L-prolyl-tRNA(Pro) + AMP + diphosphate. Functionally, catalyzes the attachment of proline to tRNA(Pro) in a two-step reaction: proline is first activated by ATP to form Pro-AMP and then transferred to the acceptor end of tRNA(Pro). As ProRS can inadvertently accommodate and process non-cognate amino acids such as alanine and cysteine, to avoid such errors it has two additional distinct editing activities against alanine. One activity is designated as 'pretransfer' editing and involves the tRNA(Pro)-independent hydrolysis of activated Ala-AMP. The other activity is designated 'posttransfer' editing and involves deacylation of mischarged Ala-tRNA(Pro). The misacylated Cys-tRNA(Pro) is not edited by ProRS. The protein is Proline--tRNA ligase of Latilactobacillus sakei subsp. sakei (strain 23K) (Lactobacillus sakei subsp. sakei).